Here is an 88-residue protein sequence, read N- to C-terminus: Small ribosomal subunit protein bS20 (88 aa).

Disordered stretches follow at residues Met1–Ala22 and Lys69–Ala88.

This sequence belongs to the bacterial ribosomal protein bS20 family.

Its function is as follows. Binds directly to 16S ribosomal RNA. This Shouchella clausii (strain KSM-K16) (Alkalihalobacillus clausii) protein is Small ribosomal subunit protein bS20.